The primary structure comprises 151 residues: uncharacterized protein (151 aa).

A run of 4 helical transmembrane segments spans residues 22–42 (IVSI…GFFF), 62–82 (ALFI…TKII), 97–117 (LFAF…ADYF), and 121–141 (IYIP…IELA).

The protein resides in the cell membrane. This is an uncharacterized protein from Bacillus subtilis (strain 168).